Here is an 893-residue protein sequence, read N- to C-terminus: Probable ion channel CASTOR (893 aa).

Residues 1–94 (MPLDPDSSPA…APRRRDPRYA (94 aa)) form a disordered region. Positions 65–85 (PLPPPEQQKQQQPPPTTPPPA) are enriched in pro residues. A helical transmembrane segment spans residues 132–152 (TLRWSGMVSVAAIVLCFSSLV). The stretch at 156 to 178 (SSLHDQVHHLKAQLAEATTKLQS) forms a coiled coil. 3 consecutive transmembrane segments (helical) span residues 210 to 230 (LLLSLSTLYAPLLILKYMDLF), 266 to 286 (LVLLVATLLLIGLGGLALYGV), and 318 to 338 (LVSVSISIGGMLVFAMMLGLV). RCK N-terminal domains lie at 359-500 (QSHT…ETVV) and 619-792 (PERI…DYVL). Residues 389–415 (TIVVMAEKDKEEMEADIAKMEFDLKGT) adopt a coiled-coil conformation.

This sequence belongs to the castor/pollux (TC 1.A.1.23) family. As to expression, expressed in roots, leaves, stems and panicles.

Its subcellular location is the nucleus membrane. Required for mycorrhizal symbiosis. The polypeptide is Probable ion channel CASTOR (Oryza sativa subsp. japonica (Rice)).